The sequence spans 406 residues: Endoplasmic reticulum resident protein 44 (406 aa).

A signal peptide spans 1–29 (MHPAVFLSLPDLRCSLLLLVTWVFTPVTT). A Thioredoxin domain is found at 30 to 138 (EITSLDTENI…VKALADYIRQ (109 aa)). 2 disulfide bridges follow: Cys189–Cys241 and Cys301–Cys318. The tract at residues 236-285 (WIQDKCVPLVREITFENGEELTEEGLPFLILFHMKEDTESLEIFQNEVAR) is interaction with ITPR1. Positions 360–387 (FHHGPDPTDTAPGEQAQDVASSPPESSF) are disordered. The span at 377–387 (DVASSPPESSF) shows a compositional bias: polar residues. The Prevents secretion from ER signature appears at 403–406 (RDEL).

Forms mixed disulfides with both ERO1A and ERO1B and cargo folding intermediates; the interactions with ERO1A and ERO1B result in their retention in the endoplasmic reticulum. Directly interacts with ITPR1 in a pH-, redox state- and calcium-dependent manner, but not with ITPR2 or ITPR3. The strength of this interaction inversely correlates with calcium concentration.

The protein resides in the endoplasmic reticulum lumen. Mediates thiol-dependent retention in the early secretory pathway, forming mixed disulfides with substrate proteins through its conserved CRFS motif. Inhibits the calcium channel activity of ITPR1. May have a role in the control of oxidative protein folding in the endoplasmic reticulum. Required to retain ERO1A and ERO1B in the endoplasmic reticulum. The chain is Endoplasmic reticulum resident protein 44 (ERP44) from Homo sapiens (Human).